Here is a 100-residue protein sequence, read N- to C-terminus: Succinate dehydrogenase assembly factor 4, mitochondrial (100 aa).

The N-terminal 31 residues, 1-31, are a transit peptide targeting the mitochondrion; sequence MFNRNLRAVILKNYNKALTRCLHDAGNLKRP. Residues 24–100 are disordered; that stretch reads DAGNLKRPTP…YSYEGRVTDF (77 aa). Basic and acidic residues-rich tracts occupy residues 36–68 and 85–100; these read LPKE…KDFE and PTVH…VTDF.

It belongs to the SDHAF4 family. Interacts with sdh1 in its FAD-bound form.

Its subcellular location is the mitochondrion matrix. In terms of biological role, plays an essential role in the assembly of succinate dehydrogenase (SDH), an enzyme complex (also referred to as respiratory complex II) that is a component of both the tricarboxylic acid (TCA) cycle and the mitochondrial electron transport chain, and which couples the oxidation of succinate to fumarate with the reduction of ubiquinone (coenzyme Q) to ubiquinol. Binds to the flavoprotein subunit sdh1 in its FAD-bound form, blocking the generation of excess reactive oxygen species (ROS) and facilitating its assembly with the iron-sulfur protein subunit sdh2 into the SDH catalytic dimer. In Schizosaccharomyces pombe (strain 972 / ATCC 24843) (Fission yeast), this protein is Succinate dehydrogenase assembly factor 4, mitochondrial.